Here is a 205-residue protein sequence, read N- to C-terminus: Protease (205 aa).

Active-site residues include His-54, Asp-71, and Cys-120.

It belongs to the peptidase C5 family. In terms of assembly, interacts with protease cofactor pVI-C; this interaction is necessary for protease activation.

Its subcellular location is the virion. The protein resides in the host nucleus. The catalysed reaction is Cleaves proteins of the adenovirus and its host cell at two consensus sites: -Yaa-Xaa-Gly-Gly-|-Xaa- and -Yaa-Xaa-Gly-Xaa-|-Gly- (in which Yaa is Met, Ile or Leu, and Xaa is any amino acid).. Its activity is regulated as follows. Requires DNA and protease cofactor for maximal activation. Inside nascent virions, becomes partially activated by binding to the viral DNA, allowing it to cleave the cofactor that binds to the protease and fully activates it. Actin, like the viral protease cofactor, seems to act as a cofactor in the cleavage of cytokeratin 18 and of actin itself. Cleaves viral precursor proteins (pTP, pIIIa, pVI, pVII, pVIII, and pX) inside newly assembled particles giving rise to mature virions. Protease complexed to its cofactor slides along the viral DNA to specifically locate and cleave the viral precursors. Mature virions have a weakened organization compared to the unmature virions, thereby facilitating subsequent uncoating. Without maturation, the particle lacks infectivity and is unable to uncoat. Late in adenovirus infection, in the cytoplasm, may participate in the cytoskeleton destruction. Cleaves host cell cytoskeletal keratins K7 and K18. This chain is Protease, found in Bos taurus (Bovine).